The sequence spans 932 residues: Protocadherin gamma-A3 (932 aa).

A signal peptide spans 1–29 (MTNCLSFRNGRGLALLCALLGTLCETGSG). 6 Cadherin domains span residues 30–133 (QIRY…APNF), 134–242 (PTEE…PPMF), 243–347 (TQPE…APEI), 348–452 (TITS…PPTF), 453–562 (PHLS…APEI), and 570–682 (DGST…EPSA). The Extracellular portion of the chain corresponds to 30–692 (QIRYSVSEEL…KPNDSDLTLY (663 aa)). 3 N-linked (GlcNAc...) asparagine glycosylation sites follow: Asn265, Asn419, and Asn545. Residue Asn685 is glycosylated (N-linked (GlcNAc...) asparagine). The helical transmembrane segment at 693 to 713 (LVVAVAAVSCVFLALVIVLLA) threads the bilayer. Over 714 to 932 (HRLRRWHKSR…KKKSGKKEKK (219 aa)) the chain is Cytoplasmic. Disordered regions lie at residues 806-841 (LLQQ…WPNN) and 902-932 (ATLT…KEKK). The segment covering 922 to 932 (NKKKSGKKEKK) has biased composition (basic residues).

The protein resides in the cell membrane. Functionally, potential calcium-dependent cell-adhesion protein. May be involved in the establishment and maintenance of specific neuronal connections in the brain. This Pan troglodytes (Chimpanzee) protein is Protocadherin gamma-A3 (PCDHGA3).